A 472-amino-acid chain; its full sequence is Bone morphogenetic protein 3 (472 aa).

A signal peptide spans 1–22 (MAGASRLLFLWLGCFCVSLAQG). A propeptide spanning residues 23–362 (ERPKPPFPEL…EQTLKKARRK (340 aa)) is cleaved from the precursor. Positions 27-37 (PPFPELRKAVP) are enriched in basic and acidic residues. The interval 27 to 53 (PPFPELRKAVPGDRTAGGGPDSELQPQ) is disordered. Residues Asn117, Asn141, Asn175, and Asn220 are each glycosylated (N-linked (GlcNAc...) asparagine). Positions 320–350 (PYKTLQAQAPEKSKNKKKQRKGPHRKSQTLQ) are disordered. Over residues 333–346 (KNKKKQRKGPHRKS) the composition is skewed to basic residues. Disulfide bonds link Cys370–Cys437, Cys399–Cys469, and Cys403–Cys471. N-linked (GlcNAc...) asparagine glycosylation occurs at Asn463.

The protein belongs to the TGF-beta family. In terms of assembly, homodimer; disulfide-linked. Interacts with type II receptor ACVR2B. As to expression, expressed in adult and fetal cartilage.

The protein resides in the secreted. Its function is as follows. Growth factor of the TGF-beta superfamily that plays an essential role in developmental process by inducing and patterning early skeletal formation and by negatively regulating bone density. Antagonizes the ability of certain osteogenic BMPs to induce osteoprogenitor differentiation and ossification. Initiates signaling cascades by associating with type II receptor ACVR2B to activate SMAD2-dependent and SMAD-independent signaling cascades including TAK1 and JNK pathways. This is Bone morphogenetic protein 3 (BMP3) from Homo sapiens (Human).